The primary structure comprises 218 residues: Glutathione S-transferase Mu 1 (218 aa).

Residues 2–88 (PMTLGYWDVR…YLARKHGLCG (87 aa)) enclose the GST N-terminal domain. Glutathione-binding positions include 7 to 8 (YW), 46 to 50 (WLSEK), 59 to 60 (NL), and 72 to 73 (QS). In terms of domain architecture, GST C-terminal spans 90-208 (TEEERIRVDI…KSSRFIRVPV (119 aa)). Tyr-116 contributes to the substrate binding site.

The protein belongs to the GST superfamily. Mu family. In terms of assembly, homodimer. As to expression, well expressed in rabbit liver, brain and kidney.

It is found in the cytoplasm. The enzyme catalyses RX + glutathione = an S-substituted glutathione + a halide anion + H(+). In terms of biological role, conjugation of reduced glutathione to a wide number of exogenous and endogenous hydrophobic electrophiles. This Oryctolagus cuniculus (Rabbit) protein is Glutathione S-transferase Mu 1.